A 247-amino-acid polypeptide reads, in one-letter code: ATP synthase subunit a, chloroplastic (247 aa).

5 helical membrane passes run 38–58, 95–115, 134–154, 199–219, and 220–240; these read QVLITSWVVIAILLGSATIAV, VPFIGTMFLFIFVSNWSGALL, INTTVALALLTSVAYFYAGLT, LVVVVLVSLVPLVVPIPVMLL, and GLFTSGIQALIFATLAAAYIG.

It belongs to the ATPase A chain family. In terms of assembly, F-type ATPases have 2 components, CF(1) - the catalytic core - and CF(0) - the membrane proton channel. CF(1) has five subunits: alpha(3), beta(3), gamma(1), delta(1), epsilon(1). CF(0) has four main subunits: a, b, b' and c.

Its subcellular location is the plastid. It localises to the chloroplast thylakoid membrane. In terms of biological role, key component of the proton channel; it plays a direct role in the translocation of protons across the membrane. This Nicotiana sylvestris (Wood tobacco) protein is ATP synthase subunit a, chloroplastic.